The chain runs to 457 residues: Multidrug resistance protein MdtK (457 aa).

12 helical membrane-spanning segments follow: residues 11-31 (LLAL…MGVV), 46-66 (AVAV…GLLL), 93-113 (WLAL…DHVI), 127-147 (AVGF…FQVL), 160-180 (GMVI…IFIY), 188-208 (LGGV…FLMM), 243-263 (LPVA…ALLV), 283-301 (LMFM…RVGF), 316-336 (YTSM…TIVF), 357-377 (LMLL…GSGV), 387-407 (IFFI…YLLG), and 418-438 (PAGF…LMVL).

Belongs to the multi antimicrobial extrusion (MATE) (TC 2.A.66.1) family. MdtK subfamily.

The protein resides in the cell inner membrane. Multidrug efflux pump that functions probably as a Na(+)/drug antiporter. The protein is Multidrug resistance protein MdtK of Yersinia pseudotuberculosis serotype IB (strain PB1/+).